A 424-amino-acid polypeptide reads, in one-letter code: UDP-N-acetylglucosamine 1-carboxyvinyltransferase (424 aa).

Phosphoenolpyruvate is bound at residue 22–23 (KN). Arg95 contacts UDP-N-acetyl-alpha-D-glucosamine. The Proton donor role is filled by Cys119. Residue Cys119 is modified to 2-(S-cysteinyl)pyruvic acid O-phosphothioketal. Residues 124–128 (RPVDQ), Asp311, and Ile333 contribute to the UDP-N-acetyl-alpha-D-glucosamine site.

Belongs to the EPSP synthase family. MurA subfamily.

The protein localises to the cytoplasm. It carries out the reaction phosphoenolpyruvate + UDP-N-acetyl-alpha-D-glucosamine = UDP-N-acetyl-3-O-(1-carboxyvinyl)-alpha-D-glucosamine + phosphate. It participates in cell wall biogenesis; peptidoglycan biosynthesis. Its function is as follows. Cell wall formation. Adds enolpyruvyl to UDP-N-acetylglucosamine. The chain is UDP-N-acetylglucosamine 1-carboxyvinyltransferase from Polaromonas sp. (strain JS666 / ATCC BAA-500).